A 101-amino-acid chain; its full sequence is UPF0235 protein SG2030 (101 aa).

It belongs to the UPF0235 family.

The polypeptide is UPF0235 protein SG2030 (Sodalis glossinidius (strain morsitans)).